The chain runs to 382 residues: Glutamyl-tRNA reductase (382 aa).

Substrate-binding positions include threonine 38–arginine 41, serine 85, glutamate 90–glutamine 92, and glutamine 96. Residue cysteine 39 is the Nucleophile of the active site. Glycine 164–glycine 169 contributes to the NADP(+) binding site.

The protein belongs to the glutamyl-tRNA reductase family. In terms of assembly, homodimer.

The catalysed reaction is (S)-4-amino-5-oxopentanoate + tRNA(Glu) + NADP(+) = L-glutamyl-tRNA(Glu) + NADPH + H(+). Its pathway is porphyrin-containing compound metabolism; protoporphyrin-IX biosynthesis; 5-aminolevulinate from L-glutamyl-tRNA(Glu): step 1/2. In terms of biological role, catalyzes the NADPH-dependent reduction of glutamyl-tRNA(Glu) to glutamate 1-semialdehyde (GSA). The chain is Glutamyl-tRNA reductase from Methanococcus maripaludis (strain C7 / ATCC BAA-1331).